A 51-amino-acid polypeptide reads, in one-letter code: Proteinase inhibitor PTI (51 aa).

4 cysteine pairs are disulfide-bonded: Cys3-Cys40, Cys6-Cys24, Cys7-Cys36, and Cys13-Cys49.

The protein belongs to the protease inhibitor I20 (potato type II proteinase inhibitor) family.

The protein localises to the secreted. This is Proteinase inhibitor PTI from Solanum tuberosum (Potato).